A 91-amino-acid polypeptide reads, in one-letter code: ATP synthase subunit c (91 aa).

The next 2 membrane-spanning stretches (helical) occupy residues 4-24 and 53-73; these read LTMC…GTGI and IGLA…LIIL.

Belongs to the ATPase C chain family. As to quaternary structure, F-type ATPases have 2 components, F(1) - the catalytic core - and F(0) - the membrane proton channel. F(1) has five subunits: alpha(3), beta(3), gamma(1), delta(1), epsilon(1). F(0) has three main subunits: a(1), b(2) and c(10-14). The alpha and beta chains form an alternating ring which encloses part of the gamma chain. F(1) is attached to F(0) by a central stalk formed by the gamma and epsilon chains, while a peripheral stalk is formed by the delta and b chains.

Its subcellular location is the cell inner membrane. Functionally, f(1)F(0) ATP synthase produces ATP from ADP in the presence of a proton or sodium gradient. F-type ATPases consist of two structural domains, F(1) containing the extramembraneous catalytic core and F(0) containing the membrane proton channel, linked together by a central stalk and a peripheral stalk. During catalysis, ATP synthesis in the catalytic domain of F(1) is coupled via a rotary mechanism of the central stalk subunits to proton translocation. In terms of biological role, key component of the F(0) channel; it plays a direct role in translocation across the membrane. A homomeric c-ring of between 10-14 subunits forms the central stalk rotor element with the F(1) delta and epsilon subunits. The protein is ATP synthase subunit c of Geobacter metallireducens (strain ATCC 53774 / DSM 7210 / GS-15).